The chain runs to 126 residues: Aspartate 1-decarboxylase (126 aa).

The active-site Schiff-base intermediate with substrate; via pyruvic acid is Ser-25. Ser-25 carries the post-translational modification Pyruvic acid (Ser). Position 57 (Thr-57) interacts with substrate. The active-site Proton donor is the Tyr-58. Gly-73–Ala-75 serves as a coordination point for substrate.

Belongs to the PanD family. In terms of assembly, heterooctamer of four alpha and four beta subunits. Pyruvate is required as a cofactor. In terms of processing, is synthesized initially as an inactive proenzyme, which is activated by self-cleavage at a specific serine bond to produce a beta-subunit with a hydroxyl group at its C-terminus and an alpha-subunit with a pyruvoyl group at its N-terminus.

The protein resides in the cytoplasm. The enzyme catalyses L-aspartate + H(+) = beta-alanine + CO2. It participates in cofactor biosynthesis; (R)-pantothenate biosynthesis; beta-alanine from L-aspartate: step 1/1. Functionally, catalyzes the pyruvoyl-dependent decarboxylation of aspartate to produce beta-alanine. This chain is Aspartate 1-decarboxylase, found in Marinomonas sp. (strain MWYL1).